Here is a 171-residue protein sequence, read N- to C-terminus: CDP-archaeol synthase (171 aa).

4 helical membrane-spanning segments follow: residues 11–31 (VLYV…GLVF), 65–85 (VGLV…IGVI), 129–149 (LILV…IMLI), and 151–171 (LVLH…DVWY).

Belongs to the CDP-archaeol synthase family. Requires Mg(2+) as cofactor.

The protein resides in the cell membrane. It carries out the reaction 2,3-bis-O-(geranylgeranyl)-sn-glycerol 1-phosphate + CTP + H(+) = CDP-2,3-bis-O-(geranylgeranyl)-sn-glycerol + diphosphate. It participates in membrane lipid metabolism; glycerophospholipid metabolism. Functionally, catalyzes the formation of CDP-2,3-bis-(O-geranylgeranyl)-sn-glycerol (CDP-archaeol) from 2,3-bis-(O-geranylgeranyl)-sn-glycerol 1-phosphate (DGGGP) and CTP. This reaction is the third ether-bond-formation step in the biosynthesis of archaeal membrane lipids. The protein is CDP-archaeol synthase of Methanothermobacter thermautotrophicus (strain ATCC 29096 / DSM 1053 / JCM 10044 / NBRC 100330 / Delta H) (Methanobacterium thermoautotrophicum).